The sequence spans 541 residues: MSAKKSTAQRLGRVLETVTRQSGRLPETPAYGSWLLGRVSESQRRRRVRIQVMLTALVVTANLLGIGVALLLVTIAIPEPSIVRDTPRWLTFGVVPGYVLLALALGSYALTRQTVQALRWAIEGRKPTREEERRTFLAPWRVAVGHLMFWGVGTALLTTLYGLINNAFIPRFLFAVSFCGVLVATATYLHTEFALRPFAAQALEAGPPPRRLAPGILGRTMVVWLLGSGVPVVGIALMAMFEMVLLNLTRMQFATGVLIISMVTLVFGFILMWILAWLTATPVRVVRAALRRVERGELRTNLVVFDGTELGELQRGFNAMVAGLRERERVRDLFGRHVGREVAAAAERERSKLGGEERHVAVVFIDIVGSTQLVTSRPPADVVKLLNKFFAIVVDEVDRHHGLVNKFEGDASLTIFGAPNRLPCPEDKALAAARAIADRLVNEMPECQAGIGVAAGQVIAGNVGARERFEYTVIGEPVNEAARLCELAKSRPGKLLASAQAVDAASEEERARWSLGRHVKLRGHDQPVRLAKPVGLTKPRR.

Transmembrane regions (helical) follow at residues 57-77, 90-110, 144-164, 167-187, 221-241, and 257-277; these read LVVT…TIAI, LTFG…SYAL, VGHL…YGLI, AFIP…ATAT, MVVW…MAMF, and VLII…ILAW. The HAMP domain maps to 278-329; the sequence is LTATPVRVVRAALRRVERGELRTNLVVFDGTELGELQRGFNAMVAGLRERER. One can recognise a Guanylate cyclase domain in the interval 361 to 485; it reads AVVFIDIVGS…EPVNEAARLC (125 aa).

The protein belongs to the adenylyl cyclase class-3 family.

Its subcellular location is the cell membrane. This is an uncharacterized protein from Mycobacterium tuberculosis (strain CDC 1551 / Oshkosh).